Consider the following 353-residue polypeptide: Rhodopsin (353 aa).

The Extracellular portion of the chain corresponds to 1 to 36; sequence MNGTEGPYFYVPMVNTSGIVRSPYEYPQYYLVNPAA. N2 and N15 each carry an N-linked (GlcNAc...) asparagine glycan. Residues 37–61 traverse the membrane as a helical segment; that stretch reads YAALGAYMFLLILVGFPINFLTLYV. Topologically, residues 62-73 are cytoplasmic; the sequence is TIEHKKLRTPLN. Residues 74–96 form a helical membrane-spanning segment; the sequence is YILLNLAVADLFMVFGGFTTTMY. At 97 to 110 the chain is on the extracellular side; it reads TSMHGYFVLGRLGC. C110 and C187 are oxidised to a cystine. Residues 111 to 133 form a helical membrane-spanning segment; the sequence is NIEGFFATLGGEIALWSLVVLAI. A 'Ionic lock' involved in activated form stabilization motif is present at residues 134-136; that stretch reads ERW. The Cytoplasmic segment spans residues 134–152; that stretch reads ERWVVVCKPISNFRFGENH. The helical transmembrane segment at 153 to 173 threads the bilayer; sequence AIMGLAFTWLMALACAAPPLV. At 174-202 the chain is on the extracellular side; it reads GWSRYIPEGMQCSCGIDYYTRAEGFNNES. Residue N200 is glycosylated (N-linked (GlcNAc...) asparagine). A helical membrane pass occupies residues 203 to 224; sequence FVIYMFICHFSIPLLVVFFCYG. Residues 225–252 are Cytoplasmic-facing; that stretch reads RLLCAVKEAAAAQQESETTQRAEREVTR. The helical transmembrane segment at 253 to 274 threads the bilayer; the sequence is MVIMMVIAFLVCWLPYASVAWW. Over 275-286 the chain is Extracellular; sequence IFTHQGSDFGPV. A helical transmembrane segment spans residues 287–308; sequence FMTIPAFFAKSSSIYNPMIYIC. An N6-(retinylidene)lysine modification is found at K296. The Cytoplasmic segment spans residues 309 to 353; sequence LNKQFRHCMITTLCCGKNPFEEEEGASTASKTEASSVSSSSVSPA. Residues C322 and C323 are each lipidated (S-palmitoyl cysteine). Positions 331 to 353 are disordered; sequence EEGASTASKTEASSVSSSSVSPA. A compositionally biased stretch (low complexity) spans 334–353; the sequence is ASTASKTEASSVSSSSVSPA.

Belongs to the G-protein coupled receptor 1 family. Opsin subfamily. Post-translationally, phosphorylated on some or all of the serine and threonine residues present in the C-terminal region. In terms of processing, contains one covalently linked retinal chromophore.

The protein resides in the membrane. Its subcellular location is the cell projection. It localises to the cilium. The protein localises to the photoreceptor outer segment. Its function is as follows. Photoreceptor required for image-forming vision at low light intensity. While most salt water fish species use retinal as chromophore, most freshwater fish use 3-dehydroretinal, or a mixture of retinal and 3-dehydroretinal. Light-induced isomerization of 11-cis to all-trans retinal triggers a conformational change that activates signaling via G-proteins. Subsequent receptor phosphorylation mediates displacement of the bound G-protein alpha subunit by arrestin and terminates signaling. The polypeptide is Rhodopsin (rho) (Diplodus vulgaris (Common two-banded seabream)).